Here is a 122-residue protein sequence, read N- to C-terminus: Histone H2B, gonadal (122 aa).

The tract at residues 1-31 (MPPKVSSKGAKKAGKAKAARSGDKKRKRRRK) is disordered. Basic residues predominate over residues 9 to 31 (GAKKAGKAKAARSGDKKRKRRRK). Ser-109 is a glycosylation site (O-linked (GlcNAc) serine). Residue Lys-117 forms a Glycyl lysine isopeptide (Lys-Gly) (interchain with G-Cter in ubiquitin) linkage.

The protein belongs to the histone H2B family. In terms of assembly, the nucleosome is a histone octamer containing two molecules each of H2A, H2B, H3 and H4 assembled in one H3-H4 heterotetramer and two H2A-H2B heterodimers. The octamer wraps approximately 147 bp of DNA. Monoubiquitination of Lys-117 gives a specific tag for epigenetic transcriptional activation and is also prerequisite for histone H3 'Lys-4' and 'Lys-79' methylation. In terms of processing, glcNAcylation at Ser-109 promotes monoubiquitination of Lys-117. It fluctuates in response to extracellular glucose, and associates with transcribed genes.

The protein resides in the nucleus. It localises to the chromosome. Core component of nucleosome. Nucleosomes wrap and compact DNA into chromatin, limiting DNA accessibility to the cellular machineries which require DNA as a template. Histones thereby play a central role in transcription regulation, DNA repair, DNA replication and chromosomal stability. DNA accessibility is regulated via a complex set of post-translational modifications of histones, also called histone code, and nucleosome remodeling. In Patella granatina (Sandpaper limpet), this protein is Histone H2B, gonadal.